The chain runs to 365 residues: DNA replication and repair protein RecF (365 aa).

Residue 23 to 30 (GPNGIGKS) participates in ATP binding.

Belongs to the RecF family.

The protein resides in the cytoplasm. Functionally, the RecF protein is involved in DNA metabolism; it is required for DNA replication and normal SOS inducibility. RecF binds preferentially to single-stranded, linear DNA. It also seems to bind ATP. This Parasynechococcus marenigrum (strain WH8102) protein is DNA replication and repair protein RecF.